Consider the following 465-residue polypeptide: Mothers against decapentaplegic homolog 5 (465 aa).

Thr2 is subject to N-acetylthreonine. The MH1 domain occupies 13–137 (PAVKRLLGWK…YKRVESPVLP (125 aa)). Cys65, Cys110, Cys122, and His127 together coordinate Zn(2+). Residues 163-251 (NEPHMPQNAT…DTSSNMIPQT (89 aa)) form a disordered region. Residues 169–182 (QNATFPDSFHQPNN) are compositionally biased toward polar residues. A compositionally biased stretch (pro residues) spans 186-197 (PLSPNSPYPPSP). Positions 198-214 (ASSTYPNSPASSGPGSP) are enriched in low complexity. A compositionally biased stretch (polar residues) spans 237-251 (NSQPMDTSSNMIPQT). The 195-residue stretch at 271–465 (WCSIVYYELN…SPLNPISSVS (195 aa)) folds into the MH2 domain. 2 positions are modified to phosphoserine: Ser463 and Ser465.

The protein belongs to the dwarfin/SMAD family. In terms of assembly, homodimer. Forms trimers with the co-SMAD SMAD4. Interacts with PEBP2-alpha subunit and SMURF1. Interacts with SUV39H1 and SUV39H2. Interacts (via MH2 domain) with LEMD3. Interacts with WWP1. Interacts with TMEM119. Interacts with ZNF8. Interacts with RANBP3L. Interacts with HK1. Interacts with HGS; this interaction attenuates BMP signaling. In terms of processing, phosphorylated on serine by BMP (bone morphogenetic proteins) type 1 receptor kinase. Ubiquitin-mediated proteolysis by SMAD-specific E3 ubiquitin ligase SMURF1. In terms of tissue distribution, predominantly expressed in mesenchyme and somites during embryogenesis, and present in many tissues of the adult.

It localises to the cytoplasm. The protein resides in the nucleus. It is found in the mitochondrion. Functionally, transcriptional regulator that plays a role in various cellular processes including embryonic development, cell differentiation, angiogenesis and tissue homeostasis. Upon BMP ligand binding to their receptors at the cell surface, is phosphorylated by activated type I BMP receptors (BMPRIs) and associates with SMAD4 to form a heteromeric complex which translocates into the nucleus acting as transcription factor. In turn, the hetero-trimeric complex recognizes cis-regulatory elements containing Smad Binding Elements (SBEs) to modulate the outcome of the signaling network. Non-phosphorylated SMAD5 has a cytoplasmic role in energy metabolism regulation by promoting mitochondrial respiration and glycolysis in response to cytoplasmic pH changes. Mechanistically, interacts with hexokinase 1/HK1 and thereby accelerates glycolysis. The polypeptide is Mothers against decapentaplegic homolog 5 (Smad5) (Mus musculus (Mouse)).